The chain runs to 569 residues: CUE domain-containing protein 5 (569 aa).

Residues 17–60 form the CUE domain; that stretch reads MAEKARATLKEAFPNTDDAIIRAVLAASGYKLEPAFNALLGLSD. Disordered stretches follow at residues 67-139, 175-275, and 311-569; these read MEQA…DDYS, DGEE…SSSA, and EELE…GKET. A compositionally biased stretch (basic and acidic residues) spans 79–100; it reads AAHDDPVQRQLEEDERCARELA. The span at 104–113 shows a compositional bias: basic residues; that stretch reads NSHRPERRRK. Residues 234-249 show a composition bias toward basic and acidic residues; it reads SDPHMLNEKDFERLRL. Residues 250–274 are compositionally biased toward low complexity; that stretch reads ESSSSPMMRRSSLNSNRRSVESSSS. The segment covering 329–340 has biased composition (basic and acidic residues); the sequence is VVVEKKPDESRK. Residues 347–364 show a composition bias toward polar residues; sequence ETVSEEQMGSSNAKSKVL. Basic and acidic residues-rich tracts occupy residues 367–381, 399–500, and 507–558; these read EPKD…KTET, ISEK…KETD, and KEEK…KIEE.

It is found in the cytoplasm. The sequence is that of CUE domain-containing protein 5 from Schizosaccharomyces pombe (strain 972 / ATCC 24843) (Fission yeast).